The following is a 984-amino-acid chain: Ephrin type-B receptor 1 (984 aa).

An N-terminal signal peptide occupies residues 1 to 17 (MALDYLLLLLLASAVAA). The Extracellular segment spans residues 18–540 (MEETLMDTRT…YKSELREQLP (523 aa)). The 183-residue stretch at 19 to 201 (EETLMDTRTA…FFKKCPSIVQ (183 aa)) folds into the Eph LBD domain. Fibronectin type-III domains lie at 322 to 432 (VPSG…TNQA) and 433 to 528 (APST…TLTD). N-linked (GlcNAc...) asparagine glycans are attached at residues Asn334, Asn426, and Asn480. The helical transmembrane segment at 541–563 (LIAGSAAAGVVFVVSLVAISIVC) threads the bilayer. Residues 564 to 984 (SRKRAYSKEA…QISQSPTAMA (421 aa)) are Cytoplasmic-facing. Position 600 is a phosphotyrosine (Tyr600). One can recognise a Protein kinase domain in the interval 619–882 (VKIEEVIGAG…EIVNTLDKMI (264 aa)). Residues 625–633 (IGAGEFGEV) and Lys651 contribute to the ATP site. Asp744 acts as the Proton acceptor in catalysis. In terms of domain architecture, SAM spans 911-975 (TAFTTVDDWL…LNSIHSMRVQ (65 aa)). At Tyr928 the chain carries Phosphotyrosine; by autocatalysis. The PDZ-binding signature appears at 982-984 (AMA).

The protein belongs to the protein kinase superfamily. Tyr protein kinase family. Ephrin receptor subfamily. In terms of assembly, heterotetramer upon binding of the ligand. The heterotetramer is composed of an ephrin dimer and a receptor dimer. Oligomerization is probably required to induce biological responses. Interacts with EPHB6; transphosphorylates EPHB6 to form an active signaling complex. Interacts with PICK1. Interacts (through Tyr-594) with NCK1 (via SH2 domain); activates the JUN cascade to regulate cell adhesion. The ligand-activated form interacts (through Tyr-928) with GRB7 and GRB10 (via SH2 domains). The ligand-activated form interacts (residues within the catalytic domain) with GRB2 (via SH2 domain). Interacts with GRB2, SHC1 and SRC; activates the MAPK/ERK cascade to regulate cell migration. Interacts with CBL; regulates receptor degradation through ubiquitination. Interacts with ACP1. Phosphorylated. Autophosphorylation is stimulated by the ligand EFNB1. Required for interaction with SH2 domain-containing interactors, for activation of the MAPK/ERK and JUN signaling cascades and for ubiquitination by CBL. In terms of processing, ubiquitinated; (EFNB1)ligand-induced poly- and/or multi-ubiquitination by CBL is regulated by SRC and leads to lysosomal degradation. Preferentially expressed in brain.

It is found in the cell membrane. The protein localises to the early endosome membrane. Its subcellular location is the cell projection. The protein resides in the dendrite. The catalysed reaction is L-tyrosyl-[protein] + ATP = O-phospho-L-tyrosyl-[protein] + ADP + H(+). Functionally, receptor tyrosine kinase which binds promiscuously transmembrane ephrin-B family ligands residing on adjacent cells, leading to contact-dependent bidirectional signaling into neighboring cells. The signaling pathway downstream of the receptor is referred to as forward signaling while the signaling pathway downstream of the ephrin ligand is referred to as reverse signaling. Cognate/functional ephrin ligands for this receptor include EFNB1, EFNB2 and EFNB3. During nervous system development, regulates retinal axon guidance redirecting ipsilaterally ventrotemporal retinal ganglion cells axons at the optic chiasm midline. This probably requires repulsive interaction with EFNB2. In the adult nervous system together with EFNB3, regulates chemotaxis, proliferation and polarity of the hippocampus neural progenitors. In addition to its role in axon guidance also plays an important redundant role with other ephrin-B receptors in development and maturation of dendritic spines and synapse formation. May also regulate angiogenesis. More generally, may play a role in targeted cell migration and adhesion. Upon activation by EFNB1 and probably other ephrin-B ligands activates the MAPK/ERK and the JNK signaling cascades to regulate cell migration and adhesion respectively. Involved in the maintenance of the pool of satellite cells (muscle stem cells) by promoting their self-renewal and reducing their activation and differentiation. The protein is Ephrin type-B receptor 1 (EPHB1) of Homo sapiens (Human).